Here is a 271-residue protein sequence, read N- to C-terminus: 1,4-dihydroxy-2-naphthoyl-CoA synthase (271 aa).

Residues 71 to 75, Tyr83, 115 to 119, Thr141, Ser147, Tyr244, and Lys259 each bind substrate; these read SGGDQ and YAIGG. 140 to 142 contributes to the hydrogencarbonate binding site; the sequence is QTG. A compositionally biased stretch (basic and acidic residues) spans 250–263; sequence KEGRDSFKEKRKPD. The segment at 250–271 is disordered; sequence KEGRDSFKEKRKPDFGQFPRFP.

This sequence belongs to the enoyl-CoA hydratase/isomerase family. MenB subfamily. Hydrogencarbonate is required as a cofactor.

The enzyme catalyses 2-succinylbenzoyl-CoA + H(+) = 1,4-dihydroxy-2-naphthoyl-CoA + H2O. Its pathway is quinol/quinone metabolism; 1,4-dihydroxy-2-naphthoate biosynthesis; 1,4-dihydroxy-2-naphthoate from chorismate: step 6/7. It functions in the pathway quinol/quinone metabolism; menaquinone biosynthesis. In terms of biological role, converts o-succinylbenzoyl-CoA (OSB-CoA) to 1,4-dihydroxy-2-naphthoyl-CoA (DHNA-CoA). This chain is 1,4-dihydroxy-2-naphthoyl-CoA synthase, found in Bacillus subtilis (strain 168).